Here is a 642-residue protein sequence, read N- to C-terminus: Threonine--tRNA ligase (642 aa).

One can recognise a TGS domain in the interval 1–61 (MPVITLPDGS…ETDAELSIIT (61 aa)). Positions 243–534 (DHRKIGKQLD…LIEEYAGRFP (292 aa)) are catalytic. The Zn(2+) site is built by C334, H385, and H511.

Belongs to the class-II aminoacyl-tRNA synthetase family. Homodimer. Requires Zn(2+) as cofactor.

It localises to the cytoplasm. The enzyme catalyses tRNA(Thr) + L-threonine + ATP = L-threonyl-tRNA(Thr) + AMP + diphosphate + H(+). Catalyzes the attachment of threonine to tRNA(Thr) in a two-step reaction: L-threonine is first activated by ATP to form Thr-AMP and then transferred to the acceptor end of tRNA(Thr). Also edits incorrectly charged L-seryl-tRNA(Thr). The polypeptide is Threonine--tRNA ligase (Shewanella sp. (strain MR-7)).